The sequence spans 103 residues: Co-chaperonin GroES (103 aa).

This sequence belongs to the GroES chaperonin family. As to quaternary structure, heptamer of 7 subunits arranged in a ring. Interacts with the chaperonin GroEL.

It localises to the cytoplasm. Its function is as follows. Together with the chaperonin GroEL, plays an essential role in assisting protein folding. The GroEL-GroES system forms a nano-cage that allows encapsulation of the non-native substrate proteins and provides a physical environment optimized to promote and accelerate protein folding. GroES binds to the apical surface of the GroEL ring, thereby capping the opening of the GroEL channel. The sequence is that of Co-chaperonin GroES from Prochlorococcus marinus (strain MIT 9215).